We begin with the raw amino-acid sequence, 136 residues long: Ubiquinol-cytochrome-c reductase complex assembly factor 2 (136 aa).

The transit peptide at 1–13 (MAALRYRRFLKLC) directs the protein to the mitochondrion.

As to quaternary structure, interacts with UQCC1.

Its subcellular location is the mitochondrion matrix. It localises to the mitochondrion nucleoid. It is found in the mitochondrion. The protein localises to the mitochondrion intermembrane space. The protein resides in the mitochondrion inner membrane. Functionally, required for the assembly of the ubiquinol-cytochrome c reductase complex (mitochondrial respiratory chain complex III or cytochrome b-c1 complex). Plays a role in the modulation of respiratory chain activities such as oxygen consumption and ATP production and via its modulation of the respiratory chain activity can regulate skeletal muscle differentiation and insulin secretion by pancreatic beta-cells. Involved in cytochrome b translation and/or stability. This Rattus norvegicus (Rat) protein is Ubiquinol-cytochrome-c reductase complex assembly factor 2 (Uqcc2).